The chain runs to 102 residues: MKAMKATKKAMTKTGLAEALAPKPSSARRIAPPSSRAWPPSAQEVKKTGKLIIPGLVMVKTRKKPATKAGKREMFGKVVLVKAQPAKTVVKAYPVKALKDNF.

Over residues 1-11 (MKAMKATKKAM) the composition is skewed to basic residues. A disordered region spans residues 1–43 (MKAMKATKKAMTKTGLAEALAPKPSSARRIAPPSSRAWPPSAQ). Positions 21–42 (APKPSSARRIAPPSSRAWPPSA) are enriched in low complexity.

It is found in the nucleus. The polypeptide is Major basic nuclear protein 2 (HCc2) (Crypthecodinium cohnii (Dinoflagellate)).